Here is a 435-residue protein sequence, read N- to C-terminus: Arginine/serine-rich coiled-coil protein 2 (435 aa).

Positions M1 to S27 are enriched in basic and acidic residues. The interval M1 to N230 is disordered. A2 is subject to N-acetylalanine. S4 carries the phosphoserine modification. Phosphothreonine occurs at positions 6 and 16. S17, S30, and S32 each carry phosphoserine. Over residues A35 to K51 the composition is skewed to basic residues. Positions R66 to R111 are enriched in basic and acidic residues. S104 carries the phosphoserine modification. Basic residues predominate over residues H112–S214. The stretch at N230–A270 forms a coiled coil. K376 participates in a covalent cross-link: Glycyl lysine isopeptide (Lys-Gly) (interchain with G-Cter in SUMO1); alternate. K376 is covalently cross-linked (Glycyl lysine isopeptide (Lys-Gly) (interchain with G-Cter in SUMO2); alternate). Residue S377 is modified to Phosphoserine.

It belongs to the RSRC2 family.

The chain is Arginine/serine-rich coiled-coil protein 2 (RSRC2) from Pongo abelii (Sumatran orangutan).